Here is a 365-residue protein sequence, read N- to C-terminus: Adenosine deaminase (365 aa).

Zn(2+) contacts are provided by His19 and His21. Residues His21, Asp23, and Gly181 each coordinate substrate. His208 serves as a coordination point for Zn(2+). Glu211 serves as the catalytic Proton donor. Position 300 (Asp300) interacts with Zn(2+).

It belongs to the metallo-dependent hydrolases superfamily. Adenosine and AMP deaminases family. Adenosine deaminase subfamily. Zn(2+) serves as cofactor.

It carries out the reaction adenosine + H2O + H(+) = inosine + NH4(+). It catalyses the reaction 2'-deoxyadenosine + H2O + H(+) = 2'-deoxyinosine + NH4(+). In terms of biological role, catalyzes the hydrolytic deamination of adenosine and 2-deoxyadenosine. The chain is Adenosine deaminase from Mycobacterium tuberculosis (strain ATCC 25177 / H37Ra).